Here is a 79-residue protein sequence, read N- to C-terminus: uncharacterized protein (79 aa).

The SpoVT-AbrB domain maps to 10–60 (EAVLTMDSKGQILLPKELRERAGLKAGDRLVAIAGCDENEEVCCLILVKAE).

This is an uncharacterized protein from Archaeoglobus fulgidus (strain ATCC 49558 / DSM 4304 / JCM 9628 / NBRC 100126 / VC-16).